A 332-amino-acid polypeptide reads, in one-letter code: L-lactate dehydrogenase A chain (332 aa).

NAD(+) is bound by residues 29-57 and arginine 99; that span reads GMVG…MEDK. Substrate-binding residues include arginine 106, asparagine 138, and arginine 169. Asparagine 138 contacts NAD(+). The active-site Proton acceptor is histidine 193. Residue threonine 248 coordinates substrate.

The protein belongs to the LDH/MDH superfamily. LDH family. As to quaternary structure, homotetramer.

It localises to the cytoplasm. The enzyme catalyses (S)-lactate + NAD(+) = pyruvate + NADH + H(+). It participates in fermentation; pyruvate fermentation to lactate; (S)-lactate from pyruvate: step 1/1. Its function is as follows. Interconverts simultaneously and stereospecifically pyruvate and lactate with concomitant interconversion of NADH and NAD(+). The sequence is that of L-lactate dehydrogenase A chain (ldha) from Eleginops maclovinus (Patagonian blennie).